The sequence spans 155 residues: Ribosomal RNA large subunit methyltransferase H (155 aa).

Residues L72, G103, and 122 to 127 each bind S-adenosyl-L-methionine; that span reads LSALTL.

It belongs to the RNA methyltransferase RlmH family. Homodimer.

The protein localises to the cytoplasm. The enzyme catalyses pseudouridine(1915) in 23S rRNA + S-adenosyl-L-methionine = N(3)-methylpseudouridine(1915) in 23S rRNA + S-adenosyl-L-homocysteine + H(+). In terms of biological role, specifically methylates the pseudouridine at position 1915 (m3Psi1915) in 23S rRNA. This is Ribosomal RNA large subunit methyltransferase H from Escherichia fergusonii (strain ATCC 35469 / DSM 13698 / CCUG 18766 / IAM 14443 / JCM 21226 / LMG 7866 / NBRC 102419 / NCTC 12128 / CDC 0568-73).